Consider the following 332-residue polypeptide: Ketol-acid reductoisomerase (NADP(+)) (332 aa).

Residues 1–182 (MAVIYYDKDC…GSNRAGILET (182 aa)) enclose the KARI N-terminal Rossmann domain. NADP(+) contacts are provided by residues 25-28 (YGAQ) and 83-86 (DTSQ). Histidine 108 is an active-site residue. Glycine 134 contacts NADP(+). Residues 183-328 (TFAEETETDL…AELRSMMSWL (146 aa)) enclose the KARI C-terminal knotted domain. Residues aspartate 191, glutamate 195, glutamate 227, and glutamate 231 each coordinate Mg(2+). Serine 252 is a substrate binding site.

The protein belongs to the ketol-acid reductoisomerase family. The cofactor is Mg(2+).

The catalysed reaction is (2R)-2,3-dihydroxy-3-methylbutanoate + NADP(+) = (2S)-2-acetolactate + NADPH + H(+). It carries out the reaction (2R,3R)-2,3-dihydroxy-3-methylpentanoate + NADP(+) = (S)-2-ethyl-2-hydroxy-3-oxobutanoate + NADPH + H(+). Its pathway is amino-acid biosynthesis; L-isoleucine biosynthesis; L-isoleucine from 2-oxobutanoate: step 2/4. The protein operates within amino-acid biosynthesis; L-valine biosynthesis; L-valine from pyruvate: step 2/4. Functionally, involved in the biosynthesis of branched-chain amino acids (BCAA). Catalyzes an alkyl-migration followed by a ketol-acid reduction of (S)-2-acetolactate (S2AL) to yield (R)-2,3-dihydroxy-isovalerate. In the isomerase reaction, S2AL is rearranged via a Mg-dependent methyl migration to produce 3-hydroxy-3-methyl-2-ketobutyrate (HMKB). In the reductase reaction, this 2-ketoacid undergoes a metal-dependent reduction by NADPH to yield (R)-2,3-dihydroxy-isovalerate. This chain is Ketol-acid reductoisomerase (NADP(+)), found in Dehalococcoides mccartyi (strain CBDB1).